A 212-amino-acid chain; its full sequence is Ubiquitin-like protein MDY2 (212 aa).

Residues Val-74–Pro-152 form the Ubiquitin-like domain. The segment at Pro-150 to Val-177 is disordered.

Interacts with GET4.

The protein resides in the cytoplasm. It is found in the cytosol. Its subcellular location is the nucleus. In terms of biological role, required for efficient mating. Involved in the production of alpha-factor, the KAR9 and TUB1 location to the shmoo tip and nuclear migration into pheromone-induced shmoos. This is Ubiquitin-like protein MDY2 (MDY2) from Saccharomyces cerevisiae (strain ATCC 204508 / S288c) (Baker's yeast).